Here is an 80-residue protein sequence, read N- to C-terminus: Exodeoxyribonuclease 7 small subunit (80 aa).

Belongs to the XseB family. As to quaternary structure, heterooligomer composed of large and small subunits.

The protein localises to the cytoplasm. The catalysed reaction is Exonucleolytic cleavage in either 5'- to 3'- or 3'- to 5'-direction to yield nucleoside 5'-phosphates.. In terms of biological role, bidirectionally degrades single-stranded DNA into large acid-insoluble oligonucleotides, which are then degraded further into small acid-soluble oligonucleotides. The polypeptide is Exodeoxyribonuclease 7 small subunit (Caulobacter sp. (strain K31)).